Consider the following 699-residue polypeptide: Elongation factor G (699 aa).

Residues 8 to 288 form the tr-type G domain; that stretch reads EDYRNFGIMA…AVCEYLPSPL (281 aa). GTP contacts are provided by residues 17–24, 86–90, and 140–143; these read AHIDAGKT, DTPGH, and NKMD.

Belongs to the TRAFAC class translation factor GTPase superfamily. Classic translation factor GTPase family. EF-G/EF-2 subfamily.

It localises to the cytoplasm. Functionally, catalyzes the GTP-dependent ribosomal translocation step during translation elongation. During this step, the ribosome changes from the pre-translocational (PRE) to the post-translocational (POST) state as the newly formed A-site-bound peptidyl-tRNA and P-site-bound deacylated tRNA move to the P and E sites, respectively. Catalyzes the coordinated movement of the two tRNA molecules, the mRNA and conformational changes in the ribosome. In Allorhizobium ampelinum (strain ATCC BAA-846 / DSM 112012 / S4) (Agrobacterium vitis (strain S4)), this protein is Elongation factor G.